We begin with the raw amino-acid sequence, 209 residues long: MGQKTHPLGFRIGITRDHKSSWFSNIKSYPKLAQEDYKIRSCIEKQLHNASISLIYIDRKVAQVQVHIHTARPGIILGKLGRGLEDLRKKLETTLKNDTQIRINLIEITDPDKEATLIAEFIVQRLEKRIAFRRVIRQAMQRAQKAKNQGIKIQVSGRLNGSEIARIESVREGRVPLQTLRAHIDYSYKTTHTIYGILGVKYGYLKEKK.

The region spanning 39 to 109 (IRSCIEKQLH…QIRINLIEIT (71 aa)) is the KH type-2 domain.

This sequence belongs to the universal ribosomal protein uS3 family. Part of the 30S ribosomal subunit.

It is found in the plastid. It localises to the chloroplast. The polypeptide is Small ribosomal subunit protein uS3c (rps3) (Gracilaria tenuistipitata (Red alga)).